The following is a 611-amino-acid chain: ATP-dependent zinc metalloprotease FtsH 1 (611 aa).

Topologically, residues 1–6 are cytoplasmic; it reads MNDNNK. A helical membrane pass occupies residues 7-27; that stretch reads IIRSMVLYLLIFIAIYAMVQL. Residues 28–107 lie on the Extracellular side of the membrane; that stretch reads YSQSTEPITD…KSEPQVGPPW (80 aa). A helical membrane pass occupies residues 108–128; sequence WVQMLPSLFLIVIFIIFWYIF. 124–131 contributes to the ATP binding site; the sequence is FWYIFMQQ. The Cytoplasmic segment spans residues 129 to 611; it reads MQQAQGGGGS…GEDIEGVQFA (483 aa). Histidine 423 lines the Zn(2+) pocket. Glutamate 424 is a catalytic residue. Zn(2+)-binding residues include histidine 427 and aspartate 499.

This sequence in the central section; belongs to the AAA ATPase family. In the C-terminal section; belongs to the peptidase M41 family. In terms of assembly, homohexamer. The cofactor is Zn(2+).

The protein localises to the cell membrane. Its function is as follows. Acts as a processive, ATP-dependent zinc metallopeptidase for both cytoplasmic and membrane proteins. Plays a role in the quality control of integral membrane proteins. The chain is ATP-dependent zinc metalloprotease FtsH 1 from Thermoanaerobacter sp. (strain X514).